A 462-amino-acid polypeptide reads, in one-letter code: Trigger factor (462 aa).

The PPIase FKBP-type domain occupies glycine 163–leucine 248. The segment at serine 442–lysine 462 is disordered. The span at alanine 452–lysine 462 shows a compositional bias: basic and acidic residues.

Belongs to the FKBP-type PPIase family. Tig subfamily.

The protein localises to the cytoplasm. It catalyses the reaction [protein]-peptidylproline (omega=180) = [protein]-peptidylproline (omega=0). Involved in protein export. Acts as a chaperone by maintaining the newly synthesized protein in an open conformation. Functions as a peptidyl-prolyl cis-trans isomerase. The chain is Trigger factor from Mycoplasmopsis synoviae (strain 53) (Mycoplasma synoviae).